The sequence spans 202 residues: Small ribosomal subunit protein uS4c (202 aa).

In terms of domain architecture, S4 RNA-binding spans 90-159 (MRLDNIIFRL…TKNYEFSQTY (70 aa)).

Belongs to the universal ribosomal protein uS4 family. Part of the 30S ribosomal subunit. Contacts protein S5. The interaction surface between S4 and S5 is involved in control of translational fidelity.

It is found in the plastid. The protein localises to the chloroplast. In terms of biological role, one of the primary rRNA binding proteins, it binds directly to 16S rRNA where it nucleates assembly of the body of the 30S subunit. With S5 and S12 plays an important role in translational accuracy. This is Small ribosomal subunit protein uS4c (rps4) from Huperzia lucidula (Shining clubmoss).